Reading from the N-terminus, the 341-residue chain is Large ribosomal subunit protein uL3 (341 aa).

2 disordered regions span residues 1–31 (MGHR…SPRS) and 234–261 (HRKG…GQMG).

Belongs to the universal ribosomal protein uL3 family. Part of the 50S ribosomal subunit. Forms a cluster with proteins L14 and L24e.

In terms of biological role, one of the primary rRNA binding proteins, it binds directly near the 3'-end of the 23S rRNA, where it nucleates assembly of the 50S subunit. This Metallosphaera sedula (strain ATCC 51363 / DSM 5348 / JCM 9185 / NBRC 15509 / TH2) protein is Large ribosomal subunit protein uL3.